Here is a 156-residue protein sequence, read N- to C-terminus: Holliday junction resolvase (156 aa).

This sequence belongs to the RuvC family. Poxviruses-type subfamily. Mg(2+) is required as a cofactor.

Its function is as follows. Nuclease that specifically cleaves and resolves four-way DNA Holliday junctions into linear duplex products. The chain is Holliday junction resolvase from Vertebrata (FPV).